Here is a 530-residue protein sequence, read N- to C-terminus: Formate--tetrahydrofolate ligase (530 aa).

46–53 (TPEGEGKT) is an ATP binding site.

The protein belongs to the formate--tetrahydrofolate ligase family.

It catalyses the reaction (6S)-5,6,7,8-tetrahydrofolate + formate + ATP = (6R)-10-formyltetrahydrofolate + ADP + phosphate. It participates in one-carbon metabolism; tetrahydrofolate interconversion. This is Formate--tetrahydrofolate ligase from Malacoplasma penetrans (strain HF-2) (Mycoplasma penetrans).